We begin with the raw amino-acid sequence, 106 residues long: HIG1 domain family member 2A (106 aa).

Ala2 is modified (N-acetylalanine). An HIG1 domain is found at 20–106 (VIEGFSPTVY…LAASAMKSQA (87 aa)). 2 consecutive transmembrane segments (helical) span residues 47–67 (PMVPIGCLGTAAALTYGLYCF) and 83–103 (IAAQGFTVVAILLGLAASAMK).

Associates with cytochrome c oxidase (COX, complex IV); proposed complex component.

Its subcellular location is the mitochondrion membrane. It localises to the mitochondrion inner membrane. Proposed subunit of cytochrome c oxidase (COX, complex IV), which is the terminal component of the mitochondrial respiratory chain that catalyzes the reduction of oxygen to water. May be involved in cytochrome c oxidase activity. May play a role in the assembly of respiratory supercomplexes. This is HIG1 domain family member 2A (Higd2a) from Mus musculus (Mouse).